Here is a 479-residue protein sequence, read N- to C-terminus: Glycogen synthase (479 aa).

Lys-15 serves as a coordination point for ADP-alpha-D-glucose.

It belongs to the glycosyltransferase 1 family. Bacterial/plant glycogen synthase subfamily.

It carries out the reaction [(1-&gt;4)-alpha-D-glucosyl](n) + ADP-alpha-D-glucose = [(1-&gt;4)-alpha-D-glucosyl](n+1) + ADP + H(+). It functions in the pathway glycan biosynthesis; glycogen biosynthesis. Synthesizes alpha-1,4-glucan chains using ADP-glucose. This chain is Glycogen synthase, found in Histophilus somni (strain 129Pt) (Haemophilus somnus).